The following is a 217-amino-acid chain: TLD domain-containing protein 2 (217 aa).

A disordered region spans residues 1–48 (MKSLRWRYTRLPSQVEDALSGEEDKEEEEEKEEETTPAPTPVPEHPMV). Positions 19–35 (LSGEEDKEEEEEKEEET) are enriched in acidic residues. The TLDc domain occupies 56–217 (QVLGASEMSQ…ISELEAWVLS (162 aa)).

It belongs to the OXR1 family.

The polypeptide is TLD domain-containing protein 2 (TLDC2) (Bos taurus (Bovine)).